A 116-amino-acid polypeptide reads, in one-letter code: MKTIIVFLSLLVLATKFGDANEGVNQEQMKEVIQNEFREDFLNEMAAMSLLQQLEAIESTLLEKEADRNSRQKRCNGKNVPCGSNHSPCCSGLSCEETFGYGWLYKSPYCVIPSNG.

The first 20 residues, 1–20 (MKTIIVFLSLLVLATKFGDA), serve as a signal peptide directing secretion. A propeptide spanning residues 21–74 (NEGVNQEQMKEVIQNEFREDFLNEMAAMSLLQQLEAIESTLLEKEADRNSRQKR) is cleaved from the precursor. 3 disulfide bridges follow: Cys-75-Cys-90, Cys-82-Cys-95, and Cys-89-Cys-110.

The protein belongs to the neurotoxin 14 (magi-1) family. 06 (ICK-Trit) subfamily. Expressed by the venom gland.

It is found in the secreted. In terms of biological role, ion channel inhibitor. The sequence is that of U16-barytoxin-Tl1c from Trittame loki (Brush-footed trapdoor spider).